Reading from the N-terminus, the 947-residue chain is Translation initiation factor IF-2 (947 aa).

The disordered stretch occupies residues 61–284 (IQANQPAKNP…TAKNNKSHKI (224 aa)). The segment covering 151–169 (QIEKAKQKLQEIQKSREAL) has biased composition (basic and acidic residues). Residues 175 to 188 (SNANNANSTNNANN) show a composition bias toward low complexity. Residues 189-206 (AKKEISEVKKQEQEIKRH) show a composition bias toward basic and acidic residues. Basic residues predominate over residues 207–218 (ENIKRRTGFRVI). Residues 247–262 (EDIKKEWQEKDKQEAK) show a composition bias toward basic and acidic residues. The tr-type G domain maps to 446 to 615 (ERPPVVTIMG…LIQADIMELK (170 aa)). The interval 455–462 (GHVDHGKT) is G1. Residue 455–462 (GHVDHGKT) participates in GTP binding. The segment at 480–484 (GITQH) is G2. Positions 501–504 (DTPG) are G3. GTP contacts are provided by residues 501–505 (DTPGH) and 555–558 (NKMD). Residues 555-558 (NKMD) are G4. A G5 region spans residues 591-593 (SAK).

It belongs to the TRAFAC class translation factor GTPase superfamily. Classic translation factor GTPase family. IF-2 subfamily.

The protein localises to the cytoplasm. In terms of biological role, one of the essential components for the initiation of protein synthesis. Protects formylmethionyl-tRNA from spontaneous hydrolysis and promotes its binding to the 30S ribosomal subunits. Also involved in the hydrolysis of GTP during the formation of the 70S ribosomal complex. This Helicobacter pylori (strain P12) protein is Translation initiation factor IF-2.